Consider the following 57-residue polypeptide: MAKAKGNREKIKLVSSAKTGHFYTTEKNKRNMPEKMEIKKFDPVIRQHVIYKEAKIK.

Belongs to the bacterial ribosomal protein bL33 family.

This is Large ribosomal subunit protein bL33 from Shewanella sp. (strain W3-18-1).